Here is a 544-residue protein sequence, read N- to C-terminus: MATVDSQRPKSAFITGITGQDGSYLVDILLEKGYQVHGLVRPSSQRRQFLSHPLRRGITLHYGDMTDSATLMQILSSITVDEVYHLAAQSHVAVSFQTPLLTCDINALGTLRLLEVLRILGLEKRVRFYSAVTSELFGNEAPAPQTEETPMAPVSPYAVSKLFQYAITANFREAYGFHASNGILFNHESPRRGTTFVTRKITTQVALIACGLSESFELGNLNATRDWGHAQDYMEGVWMMLQQPEGSDYVLATGQASSVRDFVEAAFKVIGTKIEWSGENESEMGTEVGTGKVRVRVNPEYYRPVENENLLGSAVKAKAAFGWEPKYTLESLVEEMVLSDIELVKSGKMFSTTNLDWLIDRSAEDGETTSAVNSSPSSTAGDTYKASDGWSTSGAEGSEQTECSSVAEGTDIPVPEKVELLPSAGVEEGGHDVAIDVLGKDDCGKVVLTLDEQDKPNENDEGHLAVVAVEEATATTPFVGTDLIKMDSSISIEPATPSPSTVAESERRVNLTITIDGEGRVTKVYNVPDFTAEEKVTLPTPVTA.

Residues 16–21 (GITGQD), Arg-41, 64–65 (DM), and 86–90 (LAAQS) each bind NADP(+). Ser-90 provides a ligand contact to substrate. Residues Glu-135 and Tyr-157 each act as nucleophile in the active site. Tyr-157 is a binding site for substrate. Lys-161 is a binding site for NADP(+). Residue Asn-186 coordinates substrate. Residues His-187 and Arg-192 each coordinate NADP(+). Residues 192–200 (RGTTFVTRK), Gly-219, Arg-225, and 303–306 (RPVE) each bind substrate. The interval 366 to 406 (GETTSAVNSSPSSTAGDTYKASDGWSTSGAEGSEQTECSSV) is disordered. 2 stretches are compositionally biased toward polar residues: residues 368–381 (TTSA…STAG) and 389–404 (GWST…TECS).

This sequence belongs to the NAD(P)-dependent epimerase/dehydratase family. GDP-mannose 4,6-dehydratase subfamily. The cofactor is NADP(+).

It carries out the reaction GDP-alpha-D-mannose = GDP-4-dehydro-alpha-D-rhamnose + H2O. Its pathway is antibiotic biosynthesis. In terms of biological role, GDP-mannose 4,6-dehydratase; part of the gene cluster that mediates the biosynthesis of sordarin and hypoxysordarin, glycoside antibiotics with a unique tetracyclic diterpene aglycone structure. First, the geranylgeranyl diphosphate synthase sdnC constructs GGDP from farnesyl diphosphate and isopentenyl diphosphate. The diterpene cyclase sdnA then catalyzes the cyclization of GGDP to afford cycloaraneosene. Cycloaraneosene is then hydroxylated four times by the putative cytochrome P450 monooxygenases sdnB, sdnE, sdnF and sdnH to give a hydroxylated cycloaraneosene derivative such as cycloaraneosene-8,9,13,19-tetraol. Although the order of the hydroxylations is unclear, at least C8, C9 and C13 of the cycloaraneosene skeleton are hydroxylated before the sordaricin formation. Dehydration of the 13-hydroxy group of the hydroxylated cycloaraneosene derivative might be catalyzed by an unassigned hypothetical protein such as sdnG and sdnP to construct the cyclopentadiene moiety. The FAD-dependent oxidoreductase sdnN is proposed to catalyze the oxidation at C9 of the hydroxylated cycloaraneosene derivative and also catalyze the Baeyer-Villiger oxidation to give the lactone intermediate. The presumed lactone intermediate would be hydrolyzed to give an acrolein moiety and a carboxylate moiety. Then, [4+2]cycloaddition would occur between the acrolein moiety and the cyclopentadiene moiety to give sordaricin. SdnN might also be involved in the [4+2]cycloaddition after the hypothesized oxidation to accommodate the oxidized product and prompt the [4+2]cycloaddition. GDP-6-deoxy-D-altrose may be biosynthesized from GDP-D-mannose by the putative GDP-mannose-4,6-dehydratase sdnI and the short-chain dehydrogenase sdnK. The glycosyltransferase sdnJ catalyzes the attachment of 6-deoxy-D-altrose onto the 19-hydroxy group of sordaricin to give 4'-O-demethylsordarin. The methyltransferase sdnD would complete the biosynthesis of sordarin. Sordarin can be further modified into hypoxysordarin. The unique acyl chain at the 3'-hydroxy group of hypoxysordarin would be constructed by an iterative type I PKS sdnO and the trans-acting polyketide methyltransferase sdnL. SdnL would be responsible for the introduction of an alpha-methyl group of the polyketide chain. Alternatively, the beta-lactamase-like protein sdnR might be responsible for the cleavage and transfer of the polyketide chain from the PKS sdnO to sordarin. Two putative cytochrome P450 monooxygenases, sdnQ and sdnT, might catalyze the epoxidations of the polyketide chain to complete the biosynthesis of hypoxysordarin. Transcriptional regulators sdnM and sdnS are presumably encoded for the transcriptional regulation of the expression of the sdn gene cluster. The polypeptide is GDP-mannose 4,6-dehydratase sdnI (Sordaria araneosa (Pleurage araneosa)).